A 44-amino-acid chain; its full sequence is Large ribosomal subunit protein bL34 (44 aa).

This sequence belongs to the bacterial ribosomal protein bL34 family.

In Wolbachia sp. subsp. Brugia malayi (strain TRS), this protein is Large ribosomal subunit protein bL34.